The sequence spans 399 residues: Enoyl-[acyl-carrier-protein] reductase [NADH] (399 aa).

NAD(+)-binding positions include 48–53, 74–75, 111–112, and 139–140; these read GASTGY, FE, DA, and LA. Tyr-225 is a binding site for substrate. The active-site Proton donor is the Tyr-235. Residues Lys-244 and 273–275 contribute to the NAD(+) site; that span reads VVT.

Belongs to the TER reductase family. As to quaternary structure, monomer.

It catalyses the reaction a 2,3-saturated acyl-[ACP] + NAD(+) = a (2E)-enoyl-[ACP] + NADH + H(+). It functions in the pathway lipid metabolism; fatty acid biosynthesis. In terms of biological role, involved in the final reduction of the elongation cycle of fatty acid synthesis (FAS II). Catalyzes the reduction of a carbon-carbon double bond in an enoyl moiety that is covalently linked to an acyl carrier protein (ACP). This Serratia proteamaculans (strain 568) protein is Enoyl-[acyl-carrier-protein] reductase [NADH].